A 249-amino-acid polypeptide reads, in one-letter code: MRPKIVAGNWKLHGSHAFAQALVAQVAAGLPLPGVSVIILPPLLYLSDLAQRFKGEGLAFGAQNVSHHDKGAYTGEVSAAMVADVGAHYTLVGHSERREYHHEDSELVARKFAAALSAGLRPILCVGESLPQREAGQAEVAIAMQLAPVLALVGPQGVARGLIAYEPVWAIGTGRHADPSQVQAMHAFIRGEIARQDARIGDSLLILYGGGIKPCNAAELFSQQDVDGGLIGGASLVADDFLAIARATV.

9–11 (NWK) is a substrate binding site. The active-site Electrophile is His-94. Glu-166 (proton acceptor) is an active-site residue. Residues Gly-172 and 232 to 233 (GG) contribute to the substrate site.

This sequence belongs to the triosephosphate isomerase family. In terms of assembly, homodimer.

It is found in the cytoplasm. The catalysed reaction is D-glyceraldehyde 3-phosphate = dihydroxyacetone phosphate. The protein operates within carbohydrate biosynthesis; gluconeogenesis. It functions in the pathway carbohydrate degradation; glycolysis; D-glyceraldehyde 3-phosphate from glycerone phosphate: step 1/1. Functionally, involved in the gluconeogenesis. Catalyzes stereospecifically the conversion of dihydroxyacetone phosphate (DHAP) to D-glyceraldehyde-3-phosphate (G3P). The protein is Triosephosphate isomerase of Xylella fastidiosa (strain M23).